We begin with the raw amino-acid sequence, 296 residues long: MANARALDKRRKSIRNIRKITRTMELIATARYKKAMDRAAAATAYTEQITKIVSRLADAGLDVQHPLLEQREKINTTRVLVLASNRGLCGGYNASILRTALPRIKSLRESIPNVIVDASGKRGVNGLKFRGIETEQRFLQFEDQPAYDDVEKIAEGYLAEYITGKIDRLDVVYTKFISTSKQEAVIETLLPLGSLGDESDSASDGSDDTNAEYEFLPSAESILEEVVPTSFKVKLFKCFLDAAVSEQVARMIAMKGATESAGDMIKQLSMTYNRARQSQITGEIMEIIGGVEALEG.

The protein belongs to the ATPase gamma chain family. As to quaternary structure, F-type ATPases have 2 components, CF(1) - the catalytic core - and CF(0) - the membrane proton channel. CF(1) has five subunits: alpha(3), beta(3), gamma(1), delta(1), epsilon(1). CF(0) has three main subunits: a, b and c.

The protein resides in the cell inner membrane. In terms of biological role, produces ATP from ADP in the presence of a proton gradient across the membrane. The gamma chain is believed to be important in regulating ATPase activity and the flow of protons through the CF(0) complex. The protein is ATP synthase gamma chain of Rhodopirellula baltica (strain DSM 10527 / NCIMB 13988 / SH1).